Here is a 153-residue protein sequence, read N- to C-terminus: SsrA-binding protein (153 aa).

The protein belongs to the SmpB family.

Its subcellular location is the cytoplasm. Its function is as follows. Required for rescue of stalled ribosomes mediated by trans-translation. Binds to transfer-messenger RNA (tmRNA), required for stable association of tmRNA with ribosomes. tmRNA and SmpB together mimic tRNA shape, replacing the anticodon stem-loop with SmpB. tmRNA is encoded by the ssrA gene; the 2 termini fold to resemble tRNA(Ala) and it encodes a 'tag peptide', a short internal open reading frame. During trans-translation Ala-aminoacylated tmRNA acts like a tRNA, entering the A-site of stalled ribosomes, displacing the stalled mRNA. The ribosome then switches to translate the ORF on the tmRNA; the nascent peptide is terminated with the 'tag peptide' encoded by the tmRNA and targeted for degradation. The ribosome is freed to recommence translation, which seems to be the essential function of trans-translation. The sequence is that of SsrA-binding protein from Pelotomaculum thermopropionicum (strain DSM 13744 / JCM 10971 / SI).